The sequence spans 302 residues: Cobalt-precorrin-6A reductase (302 aa).

A compositionally biased stretch (basic and acidic residues) spans Met1–Thr10. The segment at Met1–Glu37 is disordered.

It belongs to the precorrin-6x reductase family.

It carries out the reaction Co-precorrin-6B + NAD(+) = Co-precorrin-6A + NADH + H(+). The protein operates within cofactor biosynthesis; adenosylcobalamin biosynthesis; cob(II)yrinate a,c-diamide from sirohydrochlorin (anaerobic route): step 7/10. Its function is as follows. Catalyzes the reduction of the macrocycle of cobalt-precorrin-6A to cobalt-precorrin-6B. This Methanothermobacter thermautotrophicus (strain ATCC 29096 / DSM 1053 / JCM 10044 / NBRC 100330 / Delta H) (Methanobacterium thermoautotrophicum) protein is Cobalt-precorrin-6A reductase (cbiJ).